We begin with the raw amino-acid sequence, 95 residues long: Aspartyl/glutamyl-tRNA(Asn/Gln) amidotransferase subunit C (95 aa).

The protein belongs to the GatC family. As to quaternary structure, heterotrimer of A, B and C subunits.

The enzyme catalyses L-glutamyl-tRNA(Gln) + L-glutamine + ATP + H2O = L-glutaminyl-tRNA(Gln) + L-glutamate + ADP + phosphate + H(+). It catalyses the reaction L-aspartyl-tRNA(Asn) + L-glutamine + ATP + H2O = L-asparaginyl-tRNA(Asn) + L-glutamate + ADP + phosphate + 2 H(+). Functionally, allows the formation of correctly charged Asn-tRNA(Asn) or Gln-tRNA(Gln) through the transamidation of misacylated Asp-tRNA(Asn) or Glu-tRNA(Gln) in organisms which lack either or both of asparaginyl-tRNA or glutaminyl-tRNA synthetases. The reaction takes place in the presence of glutamine and ATP through an activated phospho-Asp-tRNA(Asn) or phospho-Glu-tRNA(Gln). The protein is Aspartyl/glutamyl-tRNA(Asn/Gln) amidotransferase subunit C of Acetivibrio thermocellus (strain ATCC 27405 / DSM 1237 / JCM 9322 / NBRC 103400 / NCIMB 10682 / NRRL B-4536 / VPI 7372) (Clostridium thermocellum).